The sequence spans 432 residues: Trigger factor (432 aa).

Residues 161–246 form the PPIase FKBP-type domain; it reads GTRATINFVG…VVKVEARELP (86 aa).

Belongs to the FKBP-type PPIase family. Tig subfamily.

It is found in the cytoplasm. It catalyses the reaction [protein]-peptidylproline (omega=180) = [protein]-peptidylproline (omega=0). Its function is as follows. Involved in protein export. Acts as a chaperone by maintaining the newly synthesized protein in an open conformation. Functions as a peptidyl-prolyl cis-trans isomerase. The chain is Trigger factor from Aliivibrio fischeri (strain MJ11) (Vibrio fischeri).